Consider the following 88-residue polypeptide: UPF0367 protein Synpcc7942_1638 (88 aa).

It belongs to the UPF0367 family.

This Synechococcus elongatus (strain ATCC 33912 / PCC 7942 / FACHB-805) (Anacystis nidulans R2) protein is UPF0367 protein Synpcc7942_1638.